We begin with the raw amino-acid sequence, 175 residues long: Inorganic pyrophosphatase (175 aa).

Substrate-binding residues include lysine 30, arginine 44, and tyrosine 56. Positions 66, 71, and 103 each coordinate Mg(2+). Substrate is bound at residue tyrosine 142.

This sequence belongs to the PPase family. In terms of assembly, homohexamer. It depends on Mg(2+) as a cofactor.

The protein resides in the cytoplasm. It catalyses the reaction diphosphate + H2O = 2 phosphate + H(+). In terms of biological role, catalyzes the hydrolysis of inorganic pyrophosphate (PPi) forming two phosphate ions. The sequence is that of Inorganic pyrophosphatase from Pseudomonas aeruginosa (strain ATCC 15692 / DSM 22644 / CIP 104116 / JCM 14847 / LMG 12228 / 1C / PRS 101 / PAO1).